The chain runs to 219 residues: Thiamine-phosphate synthase (219 aa).

4-amino-2-methyl-5-(diphosphooxymethyl)pyrimidine-binding positions include 48-52 (QFRQK) and Asn-84. Positions 85 and 104 each coordinate Mg(2+). Ser-123 serves as a coordination point for 4-amino-2-methyl-5-(diphosphooxymethyl)pyrimidine. 150 to 152 (TPS) is a 2-[(2R,5Z)-2-carboxy-4-methylthiazol-5(2H)-ylidene]ethyl phosphate binding site. Lys-153 is a 4-amino-2-methyl-5-(diphosphooxymethyl)pyrimidine binding site. 2-[(2R,5Z)-2-carboxy-4-methylthiazol-5(2H)-ylidene]ethyl phosphate is bound by residues Gly-181 and 199–200 (IS).

It belongs to the thiamine-phosphate synthase family. Requires Mg(2+) as cofactor.

It catalyses the reaction 2-[(2R,5Z)-2-carboxy-4-methylthiazol-5(2H)-ylidene]ethyl phosphate + 4-amino-2-methyl-5-(diphosphooxymethyl)pyrimidine + 2 H(+) = thiamine phosphate + CO2 + diphosphate. It carries out the reaction 2-(2-carboxy-4-methylthiazol-5-yl)ethyl phosphate + 4-amino-2-methyl-5-(diphosphooxymethyl)pyrimidine + 2 H(+) = thiamine phosphate + CO2 + diphosphate. The enzyme catalyses 4-methyl-5-(2-phosphooxyethyl)-thiazole + 4-amino-2-methyl-5-(diphosphooxymethyl)pyrimidine + H(+) = thiamine phosphate + diphosphate. Its pathway is cofactor biosynthesis; thiamine diphosphate biosynthesis; thiamine phosphate from 4-amino-2-methyl-5-diphosphomethylpyrimidine and 4-methyl-5-(2-phosphoethyl)-thiazole: step 1/1. Condenses 4-methyl-5-(beta-hydroxyethyl)thiazole monophosphate (THZ-P) and 2-methyl-4-amino-5-hydroxymethyl pyrimidine pyrophosphate (HMP-PP) to form thiamine monophosphate (TMP). The sequence is that of Thiamine-phosphate synthase from Helicobacter pylori (strain ATCC 700392 / 26695) (Campylobacter pylori).